A 244-amino-acid polypeptide reads, in one-letter code: Orotidine 5'-phosphate decarboxylase (244 aa).

Substrate-binding positions include aspartate 10, lysine 32, aspartate 59–threonine 68, threonine 122, arginine 184, glutamine 193, glycine 213, and arginine 214. The active-site Proton donor is the lysine 61.

It belongs to the OMP decarboxylase family. Type 1 subfamily. As to quaternary structure, homodimer.

The catalysed reaction is orotidine 5'-phosphate + H(+) = UMP + CO2. It participates in pyrimidine metabolism; UMP biosynthesis via de novo pathway; UMP from orotate: step 2/2. Functionally, catalyzes the decarboxylation of orotidine 5'-monophosphate (OMP) to uridine 5'-monophosphate (UMP). The chain is Orotidine 5'-phosphate decarboxylase from Geobacillus kaustophilus (strain HTA426).